A 179-amino-acid chain; its full sequence is Peptidyl-tRNA hydrolase 2, mitochondrial (179 aa).

A helical transmembrane segment spans residues 15–37 (STLGLAVGVACGMCLGWSLRVCF). Glycyl lysine isopeptide (Lys-Gly) (interchain with G-Cter in ubiquitin) cross-links involve residues Lys-47, Lys-76, Lys-81, Lys-95, Lys-106, Lys-115, Lys-171, and Lys-177.

Belongs to the PTH2 family. In terms of assembly, monomer. In terms of processing, ubiquitinated by PRKN during mitophagy, leading to its degradation and enhancement of mitophagy. Deubiquitinated by USP30.

It is found in the mitochondrion outer membrane. The catalysed reaction is an N-acyl-L-alpha-aminoacyl-tRNA + H2O = an N-acyl-L-amino acid + a tRNA + H(+). Peptidyl-tRNA hydrolase which releases tRNAs from the ribosome during protein synthesis. Promotes caspase-independent apoptosis by regulating the function of two transcriptional regulators, AES and TLE1. The sequence is that of Peptidyl-tRNA hydrolase 2, mitochondrial (PTRH2) from Homo sapiens (Human).